The sequence spans 432 residues: Ribosomal protein uS12 methylthiotransferase RimO (432 aa).

An MTTase N-terminal domain is found at 4–122 (NTIDIITLGC…LLADLGKAYK (119 aa)). Residues cysteine 13, cysteine 51, cysteine 85, cysteine 146, cysteine 150, and cysteine 153 each coordinate [4Fe-4S] cluster. The Radical SAM core domain occupies 132-363 (TTPHHYAYLK…MALQQEIAGE (232 aa)). The TRAM domain maps to 366-432 (QTKIGKEFKV…DDFDLYASIL (67 aa)).

Belongs to the methylthiotransferase family. RimO subfamily. [4Fe-4S] cluster serves as cofactor.

Its subcellular location is the cytoplasm. It catalyses the reaction L-aspartate(89)-[ribosomal protein uS12]-hydrogen + (sulfur carrier)-SH + AH2 + 2 S-adenosyl-L-methionine = 3-methylsulfanyl-L-aspartate(89)-[ribosomal protein uS12]-hydrogen + (sulfur carrier)-H + 5'-deoxyadenosine + L-methionine + A + S-adenosyl-L-homocysteine + 2 H(+). In terms of biological role, catalyzes the methylthiolation of an aspartic acid residue of ribosomal protein uS12. This is Ribosomal protein uS12 methylthiotransferase RimO from Phocaeicola vulgatus (strain ATCC 8482 / DSM 1447 / JCM 5826 / CCUG 4940 / NBRC 14291 / NCTC 11154) (Bacteroides vulgatus).